The chain runs to 273 residues: MRPRKRFGQHWLTDQQILDEIVAAANLQPTDRVLEIGPGKGALTSRLLPQVEALLSVEIDRDLCKYMVKNYGDRPNFLLLEADYLQTDINEFLGDFPQFQNPRKVVANIPYNITGPILEKLLGTIDRPNSNPFESIVLLIQKEVGDRLVAHPCTKAFGALTLRVQYLADCETVCVVPPKAFYPKPKVESVVVRLRPRPLAQPAQNPKLLATLIKVGFASKRKMLRNNLKSLYNPEILDPIFADLDISPQARGEEVDLLQWIALSDRLNDYPKE.

The S-adenosyl-L-methionine site is built by His10, Leu12, Gly37, Glu58, Asp83, and Asn108.

It belongs to the class I-like SAM-binding methyltransferase superfamily. rRNA adenine N(6)-methyltransferase family. RsmA subfamily.

It is found in the cytoplasm. The enzyme catalyses adenosine(1518)/adenosine(1519) in 16S rRNA + 4 S-adenosyl-L-methionine = N(6)-dimethyladenosine(1518)/N(6)-dimethyladenosine(1519) in 16S rRNA + 4 S-adenosyl-L-homocysteine + 4 H(+). Functionally, specifically dimethylates two adjacent adenosines (A1518 and A1519) in the loop of a conserved hairpin near the 3'-end of 16S rRNA in the 30S particle. May play a critical role in biogenesis of 30S subunits. In Picosynechococcus sp. (strain ATCC 27264 / PCC 7002 / PR-6) (Agmenellum quadruplicatum), this protein is Ribosomal RNA small subunit methyltransferase A.